A 209-amino-acid chain; its full sequence is Uracil phosphoribosyltransferase (209 aa).

5-phospho-alpha-D-ribose 1-diphosphate contacts are provided by residues R79, R104, and 131 to 139 (DPMLATGAS). Residues I194 and 199 to 201 (GDA) each bind uracil. D200 is a 5-phospho-alpha-D-ribose 1-diphosphate binding site.

This sequence belongs to the UPRTase family. Requires Mg(2+) as cofactor.

The catalysed reaction is UMP + diphosphate = 5-phospho-alpha-D-ribose 1-diphosphate + uracil. Its pathway is pyrimidine metabolism; UMP biosynthesis via salvage pathway; UMP from uracil: step 1/1. With respect to regulation, allosterically activated by GTP. In terms of biological role, catalyzes the conversion of uracil and 5-phospho-alpha-D-ribose 1-diphosphate (PRPP) to UMP and diphosphate. The protein is Uracil phosphoribosyltransferase of Staphylococcus aureus (strain JH1).